The sequence spans 576 residues: Sulfite reductase [NADPH] hemoprotein beta-component (576 aa).

Positions 1-12 are enriched in basic and acidic residues; it reads MNVKTEPDRSRD. The interval 1-25 is disordered; the sequence is MNVKTEPDRSRDVSQPLDKLGPDET. [4Fe-4S] cluster is bound by residues Cys-441, Cys-447, Cys-486, and Cys-490. Cys-490 is a binding site for siroheme.

It belongs to the nitrite and sulfite reductase 4Fe-4S domain family. In terms of assembly, alpha(8)-beta(8). The alpha component is a flavoprotein, the beta component is a hemoprotein. It depends on siroheme as a cofactor. [4Fe-4S] cluster serves as cofactor.

The enzyme catalyses hydrogen sulfide + 3 NADP(+) + 3 H2O = sulfite + 3 NADPH + 4 H(+). It functions in the pathway sulfur metabolism; hydrogen sulfide biosynthesis; hydrogen sulfide from sulfite (NADPH route): step 1/1. In terms of biological role, component of the sulfite reductase complex that catalyzes the 6-electron reduction of sulfite to sulfide. This is one of several activities required for the biosynthesis of L-cysteine from sulfate. This is Sulfite reductase [NADPH] hemoprotein beta-component from Nitrobacter hamburgensis (strain DSM 10229 / NCIMB 13809 / X14).